The chain runs to 314 residues: Solute carrier family 25 member 44 (314 aa).

Solcar repeat units lie at residues 18-100, 107-210, and 220-302; these read KKFY…TRKF, SNTV…YAEQ, and PHIV…LKKL. Helical transmembrane passes span 20-42, 71-90, 113-133, 185-201, 222-239, and 278-296; these read FYVF…TLIR, TGLY…GQCY, LVAG…IDVV, GYVA…AVWW, IVFQ…ASIL, and LSAR…VVGY.

It belongs to the mitochondrial carrier (TC 2.A.29) family.

The protein localises to the mitochondrion membrane. The enzyme catalyses L-valine(in) = L-valine(out). The catalysed reaction is L-leucine(in) = L-leucine(out). In terms of biological role, mitochondrial solute transporter which transports branched-chain amino acid (BCAA; valine, leucine and isoleucine) into mitochondria in brown adipose tissue (BAT). BAT is involved in BCAA catabolism and actively utilizes BCAA in the mitochondria for thermogenesis. This Pongo abelii (Sumatran orangutan) protein is Solute carrier family 25 member 44.